The sequence spans 96 residues: Aspartyl/glutamyl-tRNA(Asn/Gln) amidotransferase subunit C (96 aa).

Belongs to the GatC family. Heterotrimer of A, B and C subunits.

The enzyme catalyses L-glutamyl-tRNA(Gln) + L-glutamine + ATP + H2O = L-glutaminyl-tRNA(Gln) + L-glutamate + ADP + phosphate + H(+). It carries out the reaction L-aspartyl-tRNA(Asn) + L-glutamine + ATP + H2O = L-asparaginyl-tRNA(Asn) + L-glutamate + ADP + phosphate + 2 H(+). Allows the formation of correctly charged Asn-tRNA(Asn) or Gln-tRNA(Gln) through the transamidation of misacylated Asp-tRNA(Asn) or Glu-tRNA(Gln) in organisms which lack either or both of asparaginyl-tRNA or glutaminyl-tRNA synthetases. The reaction takes place in the presence of glutamine and ATP through an activated phospho-Asp-tRNA(Asn) or phospho-Glu-tRNA(Gln). The protein is Aspartyl/glutamyl-tRNA(Asn/Gln) amidotransferase subunit C of Wolinella succinogenes (strain ATCC 29543 / DSM 1740 / CCUG 13145 / JCM 31913 / LMG 7466 / NCTC 11488 / FDC 602W) (Vibrio succinogenes).